A 229-amino-acid polypeptide reads, in one-letter code: Uracil-DNA glycosylase (229 aa).

The Proton acceptor role is filled by Asp64.

It belongs to the uracil-DNA glycosylase (UDG) superfamily. UNG family.

It is found in the cytoplasm. It carries out the reaction Hydrolyzes single-stranded DNA or mismatched double-stranded DNA and polynucleotides, releasing free uracil.. Functionally, excises uracil residues from the DNA which can arise as a result of misincorporation of dUMP residues by DNA polymerase or due to deamination of cytosine. The sequence is that of Uracil-DNA glycosylase from Salmonella agona (strain SL483).